Consider the following 1163-residue polypeptide: Type IV pilus biogenesis factor PilY1 (1163 aa).

Positions 1 to 30 (MKSALHQIGKTSLAAALSGAVLLSAQTTHA) are cleaved as a signal peptide. A disordered region spans residues 329–352 (SVGNADSTSRSLPDGKSYSSQTPY). Positions 600, 602, 604, and 608 each coordinate Ca(2+). Residues 619-621 (RGD) form an integrin-binding motif RGD region. Ca(2+) is bound by residues Asp-851, Asn-853, Asp-855, Val-857, and Asp-859. The tract at residues 1138–1163 (SGECLTVNPGPNTRGRQNWRPIEGKN) is disordered.

It belongs to the PilY1 family. In terms of assembly, interacts (via C-terminal 532-1163) with host integrins alpha-V/beta-3 (ITGAV/ITGB3) and alpha-V/beta-5 (ITGAV/ITGB5).

The protein localises to the fimbrium. It localises to the membrane. It is found in the cytoplasm. Its subcellular location is the cytosol. Functionally, involved in pilus assembly, twitching motility and adhesion to host cells. Primes type IV pili (T4P) assembly and is required for inclusion of minor pilins PilV, PilW and PilX to the surface pili. Stabilizes assembled pilus fibers likely by antagonizing retraction mediated by PilT. Calcium-binding and calcium release by PilY1 seem to be essential for twitching motility and for regulation of pilus retraction dynamics of PilT. Adhesin for human tissue specifically recognizing a host receptor localized or enriched on basolateral epithelial cell surfaces. Binds host integrins in an calcium-dependent manner in vitro and this interaction may be employed by the bacterium to mediate host epithelial cell binding in vivo. The chain is Type IV pilus biogenesis factor PilY1 from Pseudomonas aeruginosa (strain PAK).